The primary structure comprises 281 residues: NADPH-dependent 7-cyano-7-deazaguanine reductase (281 aa).

81–83 (VES) provides a ligand contact to substrate. 83 to 84 (SK) serves as a coordination point for NADPH. Cysteine 188 functions as the Thioimide intermediate in the catalytic mechanism. The Proton donor role is filled by aspartate 195. 227 to 228 (HE) serves as a coordination point for substrate. 256–257 (RG) serves as a coordination point for NADPH. The interval 261 to 281 (INPLRTSHPQGLPRNMRTARQ) is disordered.

The protein belongs to the GTP cyclohydrolase I family. QueF type 2 subfamily. Homodimer.

The protein resides in the cytoplasm. The catalysed reaction is 7-aminomethyl-7-carbaguanine + 2 NADP(+) = 7-cyano-7-deazaguanine + 2 NADPH + 3 H(+). Its pathway is tRNA modification; tRNA-queuosine biosynthesis. Catalyzes the NADPH-dependent reduction of 7-cyano-7-deazaguanine (preQ0) to 7-aminomethyl-7-deazaguanine (preQ1). The chain is NADPH-dependent 7-cyano-7-deazaguanine reductase from Verminephrobacter eiseniae (strain EF01-2).